Reading from the N-terminus, the 378-residue chain is Deoxyguanosinetriphosphate triphosphohydrolase-like protein (378 aa).

The segment at 1 to 28 (MLAPFACQPGESRGRQKPESMSTFRSPF) is disordered. Residues 62–198 (RLTHSIEVAQ…AAIADDVAYS (137 aa)) enclose the HD domain.

Belongs to the dGTPase family. Type 2 subfamily.

The chain is Deoxyguanosinetriphosphate triphosphohydrolase-like protein from Cereibacter sphaeroides (strain ATCC 17029 / ATH 2.4.9) (Rhodobacter sphaeroides).